A 79-amino-acid chain; its full sequence is uncharacterized protein (79 aa).

An N-terminal signal peptide occupies residues 1–33 (MRFIIRTVMLIALVWIGLLLSGYGVLIGSKENA).

This is an uncharacterized protein from Escherichia coli O6:K15:H31 (strain 536 / UPEC).